Here is a 259-residue protein sequence, read N- to C-terminus: Type III pantothenate kinase (259 aa).

9–16 (DAGNSRIK) contacts ATP. Substrate contacts are provided by residues tyrosine 93 and 100 to 103 (GSDR). Aspartate 102 acts as the Proton acceptor in catalysis. Position 126 (threonine 126) interacts with ATP. Threonine 190 contributes to the substrate binding site.

The protein belongs to the type III pantothenate kinase family. Homodimer. The cofactor is NH4(+). Requires K(+) as cofactor.

The protein localises to the cytoplasm. The enzyme catalyses (R)-pantothenate + ATP = (R)-4'-phosphopantothenate + ADP + H(+). It functions in the pathway cofactor biosynthesis; coenzyme A biosynthesis; CoA from (R)-pantothenate: step 1/5. Catalyzes the phosphorylation of pantothenate (Pan), the first step in CoA biosynthesis. The protein is Type III pantothenate kinase of Burkholderia pseudomallei (strain K96243).